Here is a 143-residue protein sequence, read N- to C-terminus: Probable prefoldin subunit 2 (143 aa).

It belongs to the prefoldin subunit beta family. In terms of assembly, heterohexamer of two PFD-alpha type and four PFD-beta type subunits.

Binds specifically to cytosolic chaperonin (c-CPN) and transfers target proteins to it. Binds to nascent polypeptide chain and promotes folding in an environment in which there are many competing pathways for nonnative proteins. The chain is Probable prefoldin subunit 2 from Drosophila melanogaster (Fruit fly).